The primary structure comprises 147 residues: Protein Turandot Z (147 aa).

An N-terminal signal peptide occupies residues 1–23 (MYFAIRLSFVLAVLICLTGNGSA).

The protein belongs to the Turandot family.

The protein resides in the secreted. A humoral factor that may play a role in stress tolerance. This is Protein Turandot Z from Drosophila melanogaster (Fruit fly).